A 305-amino-acid chain; its full sequence is Dihydroorotate dehydrogenase B (NAD(+)), catalytic subunit (305 aa).

FMN-binding positions include S21 and 45–46 (KA). Substrate contacts are provided by residues K45 and 69 to 73 (NAIGL). The FMN site is built by N99 and N127. N127 is a substrate binding site. C130 functions as the Nucleophile in the catalytic mechanism. Positions 165 and 190 each coordinate FMN. 191-192 (NT) provides a ligand contact to substrate. FMN is bound by residues G216, 242 to 243 (GG), and 264 to 265 (GT).

This sequence belongs to the dihydroorotate dehydrogenase family. Type 1 subfamily. As to quaternary structure, heterotetramer of 2 PyrK and 2 PyrD type B subunits. FMN is required as a cofactor.

Its subcellular location is the cytoplasm. It catalyses the reaction (S)-dihydroorotate + NAD(+) = orotate + NADH + H(+). Its pathway is pyrimidine metabolism; UMP biosynthesis via de novo pathway; orotate from (S)-dihydroorotate (NAD(+) route): step 1/1. Its function is as follows. Catalyzes the conversion of dihydroorotate to orotate with NAD(+) as electron acceptor. This is Dihydroorotate dehydrogenase B (NAD(+)), catalytic subunit (pyrD) from Staphylococcus carnosus (strain TM300).